We begin with the raw amino-acid sequence, 299 residues long: Myozenin-1 (299 aa).

Residues M1–L34 form a disordered region. Position 82 is a phosphoserine (S82). The tract at residues G102–E174 is disordered. 2 stretches are compositionally biased toward gly residues: residues G112–G125 and S137–G173.

It belongs to the myozenin family. As to quaternary structure, interacts with ACTN2, ACTN3, FLNA, FLNB, FLNC, LDB3, PPP3CA and TCAP. Interacts via its C-terminal region with MYOT. As to expression, expressed primarily in skeletal muscle. Detected at lower levels in heart, prostate and pancreas.

The protein resides in the nucleus. The protein localises to the cell projection. It localises to the pseudopodium. Functionally, myozenins may serve as intracellular binding proteins involved in linking Z-disk proteins such as alpha-actinin, gamma-filamin, TCAP/telethonin, LDB3/ZASP and localizing calcineurin signaling to the sarcomere. Plays an important role in the modulation of calcineurin signaling. May play a role in myofibrillogenesis. This is Myozenin-1 from Homo sapiens (Human).